The primary structure comprises 235 residues: Sugar fermentation stimulation protein homolog (235 aa).

Belongs to the SfsA family.

This chain is Sugar fermentation stimulation protein homolog, found in Aliivibrio fischeri (strain ATCC 700601 / ES114) (Vibrio fischeri).